The sequence spans 853 residues: Envelope glycoprotein gp160 (853 aa).

The first 31 residues, Met1–Asp31, serve as a signal peptide directing secretion. At Asn32–Ile681 the chain is on the extracellular side. An intrachain disulfide couples Cys53 to Cys73. Residues Asn87, Asn129, Asn137, Asn143, Asn153, Asn157, Asn183, Asn188, Asn198, Asn235, Asn242, Asn263, Asn277, and Asn290 are each glycosylated (N-linked (GlcNAc...) asparagine; by host). Disulfide bonds link Cys118/Cys206, Cys125/Cys197, Cys130/Cys154, Cys219/Cys248, and Cys229/Cys240. The segment at Cys130–Asn153 is V1. The tract at residues Cys154–Cys197 is V2. The V3 stretch occupies residues Cys297 to His329. A disulfide bond links Cys297 and Cys330. Asn331 and Asn353 each carry an N-linked (GlcNAc...) asparagine; by host glycan. Residues Ser362 to His372 are CD4-binding loop. 2 disulfide bridges follow: Cys376–Cys442 and Cys383–Cys416. Residues Cys383–Cys416 are V4. N-linked (GlcNAc...) asparagine; by host glycosylation is found at Asn384, Asn390, Asn394, Asn400, Asn405, Asn406, Asn411, Asn445, Asn458, Asn459, and Asn462. V5 stretches follow at residues Ile457–Gly468 and Ser460–Gly468. A fusion peptide region spans residues Ala509 to Ala529. An immunosuppression region spans residues Lys571 to Leu589. Cys595 and Cys601 are disulfide-bonded. N-linked (GlcNAc...) asparagine; by host glycans are attached at residues Asn608, Asn613, Asn622, and Asn634. Positions Arg630–Ala664 form a coiled coil. Residues Glu659–Lys680 form an MPER; binding to GalCer region. The helical transmembrane segment at Phe682–Val702 threads the bilayer. Topologically, residues Asn703 to Leu853 are cytoplasmic. A YXXL motif; contains endocytosis signal motif is present at residues Tyr709 to Leu712. The interval Thr716–Gly738 is disordered. Over residues Gly723–Gly738 the composition is skewed to basic and acidic residues. S-palmitoyl cysteine; by host attachment occurs at residues Cys761 and Cys834. Residues Leu852–Leu853 carry the Di-leucine internalization motif motif.

This sequence belongs to the HIV-1 env protein family. As to quaternary structure, the mature envelope protein (Env) consists of a homotrimer of non-covalently associated gp120-gp41 heterodimers. The resulting complex protrudes from the virus surface as a spike. There seems to be as few as 10 spikes on the average virion. Interacts with host CD4, CCR5 and CXCR4. Gp120 also interacts with the C-type lectins CD209/DC-SIGN and CLEC4M/DC-SIGNR (collectively referred to as DC-SIGN(R)). Gp120 and gp41 interact with GalCer. Gp120 interacts with host ITGA4/ITGB7 complex; on CD4+ T-cells, this interaction results in rapid activation of integrin ITGAL/LFA-1, which facilitates efficient cell-to-cell spreading of HIV-1. Gp120 interacts with cell-associated heparan sulfate; this interaction increases virus infectivity on permissive cells and may be involved in infection of CD4- cells. The mature envelope protein (Env) consists of a homotrimer of non-covalently associated gp120-gp41 heterodimers. The resulting complex protrudes from the virus surface as a spike. There seems to be as few as 10 spikes on the average virion. Post-translationally, highly glycosylated by host. The high number of glycan on the protein is reffered to as 'glycan shield' because it contributes to hide protein sequence from adaptive immune system. Palmitoylation of the transmembrane protein and of Env polyprotein (prior to its proteolytic cleavage) is essential for their association with host cell membrane lipid rafts. Palmitoylation is therefore required for envelope trafficking to classical lipid rafts, but not for viral replication. In terms of processing, specific enzymatic cleavages in vivo yield mature proteins. Envelope glycoproteins are synthesized as an inactive precursor that is heavily N-glycosylated and processed likely by host cell furin in the Golgi to yield the mature SU and TM proteins. The cleavage site between SU and TM requires the minimal sequence [KR]-X-[KR]-R. About 2 of the 9 disulfide bonds of gp41 are reduced by P4HB/PDI, following binding to CD4 receptor.

It is found in the virion membrane. Its subcellular location is the host cell membrane. It localises to the host endosome membrane. Functionally, oligomerizes in the host endoplasmic reticulum into predominantly trimers. In a second time, gp160 transits in the host Golgi, where glycosylation is completed. The precursor is then proteolytically cleaved in the trans-Golgi and thereby activated by cellular furin or furin-like proteases to produce gp120 and gp41. Its function is as follows. Attaches the virus to the host lymphoid cell by binding to the primary receptor CD4. This interaction induces a structural rearrangement creating a high affinity binding site for a chemokine coreceptor like CXCR4 and/or CCR5. Acts as a ligand for CD209/DC-SIGN and CLEC4M/DC-SIGNR, which are respectively found on dendritic cells (DCs), and on endothelial cells of liver sinusoids and lymph node sinuses. These interactions allow capture of viral particles at mucosal surfaces by these cells and subsequent transmission to permissive cells. HIV subverts the migration properties of dendritic cells to gain access to CD4+ T-cells in lymph nodes. Virus transmission to permissive T-cells occurs either in trans (without DCs infection, through viral capture and transmission), or in cis (following DCs productive infection, through the usual CD4-gp120 interaction), thereby inducing a robust infection. In trans infection, bound virions remain infectious over days and it is proposed that they are not degraded, but protected in non-lysosomal acidic organelles within the DCs close to the cell membrane thus contributing to the viral infectious potential during DCs' migration from the periphery to the lymphoid tissues. On arrival at lymphoid tissues, intact virions recycle back to DCs' cell surface allowing virus transmission to CD4+ T-cells. In terms of biological role, acts as a class I viral fusion protein. Under the current model, the protein has at least 3 conformational states: pre-fusion native state, pre-hairpin intermediate state, and post-fusion hairpin state. During fusion of viral and target intracellular membranes, the coiled coil regions (heptad repeats) assume a trimer-of-hairpins structure, positioning the fusion peptide in close proximity to the C-terminal region of the ectodomain. The formation of this structure appears to drive apposition and subsequent fusion of viral and target cell membranes. Complete fusion occurs in host cell endosomes and is dynamin-dependent, however some lipid transfer might occur at the plasma membrane. The virus undergoes clathrin-dependent internalization long before endosomal fusion, thus minimizing the surface exposure of conserved viral epitopes during fusion and reducing the efficacy of inhibitors targeting these epitopes. Membranes fusion leads to delivery of the nucleocapsid into the cytoplasm. This is Envelope glycoprotein gp160 from Human immunodeficiency virus type 1 group M subtype D (isolate ELI) (HIV-1).